The following is a 362-amino-acid chain: Prostaglandin F2-alpha receptor (362 aa).

Residues 1–31 (MSTNNSVQPVSPASELLSNTTCQLEEDLSIS) lie on the Extracellular side of the membrane. Residues asparagine 4 and asparagine 19 are each glycosylated (N-linked (GlcNAc...) asparagine). A helical transmembrane segment spans residues 32–54 (FSIIFMTVGILSNSLAIAILMKA). Topologically, residues 55–69 (YQRFRQKYKSSFLLL) are cytoplasmic. Residues 70-90 (ASALVITDFFGHLINGTIAVF) traverse the membrane as a helical segment. Topologically, residues 91–109 (VYASDKDWIYFDKSNILCS) are extracellular. A disulfide bridge connects residues cysteine 108 and cysteine 186. A helical transmembrane segment spans residues 110–131 (IFGICMVFSGLCPLFLGSLMAI). The Cytoplasmic segment spans residues 132–152 (ERCIGVTKPIFHSTKITTKHV). Residues 153 to 175 (KMMLSGVCFFAVFVALLPILGHR) form a helical membrane-spanning segment. Residues 176-198 (DYKIQASRTWCFYKTDQIKDWED) lie on the Extracellular side of the membrane. The chain crosses the membrane as a helical span at residues 199–224 (RFYLLLFAFLGLLALGISFVCNAITG). Topologically, residues 225–250 (ISLLKVKFRSQQHRQGRSHHFEMVIQ) are cytoplasmic. Residues 251–267 (LLGIMCVSCICWSPFLV) form a helical membrane-spanning segment. The Extracellular portion of the chain corresponds to 268–285 (TMASIGMNIQDFKDSCER). A helical membrane pass occupies residues 286–307 (TLFTLRMATWNQILDPWVYILL). The Cytoplasmic portion of the chain corresponds to 308–362 (RKAVLRNLYVCTRRCCGVHVISLHVWELSSIKNSLKVAAISDLPVTEKVTQQTST).

Belongs to the G-protein coupled receptor 1 family.

It is found in the cell membrane. Functionally, receptor for prostaglandin F2-alpha (PGF2-alpha). The activity of this receptor is mediated by G proteins which activate a phosphatidylinositol-calcium second messenger system. Initiates luteolysis in the corpus luteum. The protein is Prostaglandin F2-alpha receptor (PTGFR) of Ovis aries (Sheep).